The chain runs to 625 residues: Grainyhead-like protein 2 homolog (625 aa).

3 disordered regions span residues methionine 1–asparagine 24, valine 82–asparagine 112, and glutamate 428–lysine 453. The transcription activation stretch occupies residues methionine 1–glutamate 93. Polar residues-rich tracts occupy residues leucine 98 to glycine 109 and glutamine 440 to aspartate 451. One can recognise a Grh/CP2 DB domain in the interval serine 244–isoleucine 482.

This sequence belongs to the grh/CP2 family. Grainyhead subfamily. Homodimer, also forms heterodimers with GRHL1 or GRHL3. As to expression, expressed in keratinocytes (at protein level). Highly expressed in placenta, prostate, brain and kidney. Lower-level expression in a variety of epithelial tissues such as thymus, lung, salivary gland, mammary gland and digestive tract. Expressed in the cochlear. Expressed in corneal epithelial cells, but not in the endothelium or stroma.

It is found in the nucleus. The protein resides in the membrane. Functionally, transcription factor playing an important role in primary neurulation and in epithelial development. Binds directly to the consensus DNA sequence 5'-AACCGGTT-3' acting as an activator and repressor on distinct target genes. During embryogenesis, plays unique and cooperative roles with GRHL3 in establishing distinct zones of primary neurulation. Essential for closure 3 (rostral end of the forebrain), functions cooperatively with GRHL3 in closure 2 (forebrain/midbrain boundary) and posterior neuropore closure. Regulates epithelial morphogenesis acting as a target gene-associated transcriptional activator of apical junctional complex components. Up-regulates of CLDN3 and CLDN4, as well as of RAB25, which increases the CLDN4 protein and its localization at tight junctions. Comprises an essential component of the transcriptional machinery that establishes appropriate expression levels of CLDN4 and CDH1 in different types of epithelia. Exhibits functional redundancy with GRHL3 in epidermal morphogenetic events and epidermal wound repair. In lung, forms a regulatory loop with NKX2-1 that coordinates lung epithelial cell morphogenesis and differentiation. In keratinocytes, plays a role in telomerase activation during cellular proliferation, regulates TERT expression by binding to TERT promoter region and inhibiting DNA methylation at the 5'-CpG island, possibly by interfering with DNMT1 enzyme activity. In addition, impairs keratinocyte differentiation and epidermal function by inhibiting the expression of genes clustered at the epidermal differentiation complex (EDC) as well as GRHL1 and GRHL3 through epigenetic mechanisms. The chain is Grainyhead-like protein 2 homolog (GRHL2) from Homo sapiens (Human).